The sequence spans 266 residues: Glucosamine-6-phosphate deaminase (266 aa).

Asp72 acts as the Proton acceptor; for enolization step in catalysis. Asp141 functions as the For ring-opening step in the catalytic mechanism. His143 functions as the Proton acceptor; for ring-opening step in the catalytic mechanism. The For ring-opening step role is filled by Glu148.

This sequence belongs to the glucosamine/galactosamine-6-phosphate isomerase family. NagB subfamily. As to quaternary structure, homohexamer.

It carries out the reaction alpha-D-glucosamine 6-phosphate + H2O = beta-D-fructose 6-phosphate + NH4(+). It participates in amino-sugar metabolism; N-acetylneuraminate degradation; D-fructose 6-phosphate from N-acetylneuraminate: step 5/5. Allosterically activated by N-acetylglucosamine 6-phosphate (GlcNAc6P). Catalyzes the reversible isomerization-deamination of glucosamine 6-phosphate (GlcN6P) to form fructose 6-phosphate (Fru6P) and ammonium ion. This chain is Glucosamine-6-phosphate deaminase, found in Aliivibrio salmonicida (strain LFI1238) (Vibrio salmonicida (strain LFI1238)).